Reading from the N-terminus, the 736-residue chain is Probable methionine--tRNA ligase, cytoplasmic (736 aa).

The 'HIGH' region signature appears at 25-35; sequence PYVNNVPHLGN. Positions 346–350 match the 'KMSKS' region motif; the sequence is KFSKS. K349 lines the ATP pocket. Positions 573–680 constitute a tRNA-binding domain; sequence PEFPIDMKIA…QSIEAGSKIA (108 aa).

It belongs to the class-I aminoacyl-tRNA synthetase family.

The protein resides in the cytoplasm. The enzyme catalyses tRNA(Met) + L-methionine + ATP = L-methionyl-tRNA(Met) + AMP + diphosphate. The chain is Probable methionine--tRNA ligase, cytoplasmic (metS) from Dictyostelium discoideum (Social amoeba).